The chain runs to 161 residues: Interleukin-17F (161 aa).

An N-terminal signal peptide occupies residues 1 to 28 (MKGSCETTMVKSLLLLMLGFAIISSGAA). The N-linked (GlcNAc...) asparagine glycan is linked to asparagine 83. Cystine bridges form between cysteine 100–cysteine 150 and cysteine 105–cysteine 152.

This sequence belongs to the IL-17 family. In terms of assembly, homodimer; disulfide-linked. Heterodimer with IL17A (IL17A-IL17F). Forms complexes with IL17RA and IL17RC receptors with 2:1 binding stoichiometry: two receptor chains for one interleukin molecule. IL17F homodimer forms predominantly complexes with IL17RC homodimer, whereas IL17A-IL17F favors complexes with IL17RA-IL17RC. IL17RA and IL17RC chains cannot distinguish between IL17A and IL17F molecules, potentially enabling the formation of topologically distinct complexes.

The protein localises to the secreted. Functionally, effector cytokine of innate and adaptive immune system involved in antimicrobial host defense and maintenance of tissue integrity. IL17A-IL17F signals via IL17RA-IL17RC heterodimeric receptor complex, triggering homotypic interaction of IL17RA and IL17RC chains with TRAF3IP2 adapter through SEFIR domains. This leads to downstream TRAF6-mediated activation of NF-kappa-B and MAPkinase pathways ultimately resulting in transcriptional activation of cytokines, chemokines, antimicrobial peptides and matrix metalloproteinases, with potential strong immune inflammation. IL17A-IL17F is primarily involved in host defense against extracellular bacteria and fungi by inducing neutrophilic inflammation. As signature effector cytokine of T-helper 17 cells (Th17), primarily induces neutrophil activation and recruitment at infection and inflammatory sites. Stimulates the production of antimicrobial beta-defensins DEFB1, DEFB103A, and DEFB104A by mucosal epithelial cells, limiting the entry of microbes through the epithelial barriers. IL17F homodimer can signal via IL17RC homodimeric receptor complex, triggering downstream activation of TRAF6 and NF-kappa-B signaling pathway. Via IL17RC induces transcriptional activation of IL33, a potent cytokine that stimulates group 2 innate lymphoid cells and adaptive T-helper 2 cells involved in pulmonary allergic response to fungi. Likely via IL17RC, promotes sympathetic innervation of peripheral organs by coordinating the communication between gamma-delta T cells and parenchymal cells. Stimulates sympathetic innervation of thermogenic adipose tissue by driving TGFB1 expression. Regulates the composition of intestinal microbiota and immune tolerance by inducing antimicrobial proteins that specifically control the growth of commensal Firmicutes and Bacteroidetes. This is Interleukin-17F (Il17f) from Rattus norvegicus (Rat).